A 196-amino-acid polypeptide reads, in one-letter code: DNA replication complex GINS protein PSF1 (196 aa).

It belongs to the GINS1/PSF1 family. Component of the GINS complex which is a heterotetramer of gins1/psf1, gins2/psf2, gins3/psf3 and gins4/sld5. Component of the CMG helicase complex, composed of the mcm2-7 complex, the GINS complex and cdc45.

Its subcellular location is the nucleus. It localises to the chromosome. Functionally, required for correct functioning of the GINS complex, a complex that plays an essential role in the initiation of DNA replication, and progression of DNA replication forks. GINS complex is a core component of CDC45-MCM-GINS (CMG) helicase, the molecular machine that unwinds template DNA during replication, and around which the replisome is built. In Xenopus laevis (African clawed frog), this protein is DNA replication complex GINS protein PSF1.